A 787-amino-acid polypeptide reads, in one-letter code: Signal transducer and activator of transcription 5B (787 aa).

Tyr-90 is modified (phosphotyrosine). Ser-128 and Ser-193 each carry phosphoserine. The tract at residues 232–321 is required for interaction with NMI; sequence KHQKTLQLLR…MLAEVNATIT (90 aa). The SH2 domain maps to 589 to 686; that stretch reads WNDGAILGFV…EVYSKYYTPV (98 aa). Residue Tyr-682 is modified to Phosphotyrosine. Tyr-699 carries the phosphotyrosine; by HCK, JAK and PTK6 modification.

This sequence belongs to the transcription factor STAT family. As to quaternary structure, upon activation, forms homodimers. Forms also heterodimers with related family members. Binds NR3C1. Interacts with NCOA1. Interacts with NMI. Interacts with SOCS7. Interacts (via SH2 domain) with INSR. Interacts with CPEB3; this inhibits STAT5B-mediated transcriptional activation. In terms of processing, tyrosine phosphorylated in response to signaling via activated KIT, resulting in translocation to the nucleus. Tyrosine phosphorylated in response to signaling via activated FLT3; wild-type FLT3 results in much weaker phosphorylation than constitutively activated mutant FLT3. Alternatively, can be phosphorylated by JAK2. Phosphorylation at Tyr-699 by PTK6 or HCK leads to an increase of its transcriptional activity.

Its subcellular location is the cytoplasm. The protein localises to the nucleus. Functionally, carries out a dual function: signal transduction and activation of transcription. Mediates cellular responses to the cytokine KITLG/SCF and other growth factors. Binds to the GAS element and activates PRL-induced transcription. Positively regulates hematopoietic/erythroid differentiation. This is Signal transducer and activator of transcription 5B (STAT5B) from Homo sapiens (Human).